Here is a 702-residue protein sequence, read N- to C-terminus: Ribosomal RNA large subunit methyltransferase K/L (702 aa).

The THUMP domain occupies L43–L154.

Belongs to the methyltransferase superfamily. RlmKL family.

The protein localises to the cytoplasm. It carries out the reaction guanosine(2445) in 23S rRNA + S-adenosyl-L-methionine = N(2)-methylguanosine(2445) in 23S rRNA + S-adenosyl-L-homocysteine + H(+). It catalyses the reaction guanosine(2069) in 23S rRNA + S-adenosyl-L-methionine = N(2)-methylguanosine(2069) in 23S rRNA + S-adenosyl-L-homocysteine + H(+). Specifically methylates the guanine in position 2445 (m2G2445) and the guanine in position 2069 (m7G2069) of 23S rRNA. The sequence is that of Ribosomal RNA large subunit methyltransferase K/L from Salmonella paratyphi B (strain ATCC BAA-1250 / SPB7).